The sequence spans 256 residues: Thiazole synthase (256 aa).

K98 (schiff-base intermediate with DXP) is an active-site residue. 1-deoxy-D-xylulose 5-phosphate contacts are provided by residues G159, 185 to 186 (AG), and 207 to 208 (NT).

This sequence belongs to the ThiG family. In terms of assembly, homotetramer. Forms heterodimers with either ThiH or ThiS.

It is found in the cytoplasm. It catalyses the reaction [ThiS sulfur-carrier protein]-C-terminal-Gly-aminoethanethioate + 2-iminoacetate + 1-deoxy-D-xylulose 5-phosphate = [ThiS sulfur-carrier protein]-C-terminal Gly-Gly + 2-[(2R,5Z)-2-carboxy-4-methylthiazol-5(2H)-ylidene]ethyl phosphate + 2 H2O + H(+). It participates in cofactor biosynthesis; thiamine diphosphate biosynthesis. Functionally, catalyzes the rearrangement of 1-deoxy-D-xylulose 5-phosphate (DXP) to produce the thiazole phosphate moiety of thiamine. Sulfur is provided by the thiocarboxylate moiety of the carrier protein ThiS. In vitro, sulfur can be provided by H(2)S. The chain is Thiazole synthase from Aliivibrio fischeri (strain MJ11) (Vibrio fischeri).